The following is a 643-amino-acid chain: tRNA 5-methylaminomethyl-2-thiouridine biosynthesis bifunctional protein MnmC (643 aa).

Residues Met-1–Ala-223 form a tRNA (mnm(5)s(2)U34)-methyltransferase region. Residues Ile-247–Gly-643 form an FAD-dependent cmnm(5)s(2)U34 oxidoreductase region.

The protein in the N-terminal section; belongs to the methyltransferase superfamily. tRNA (mnm(5)s(2)U34)-methyltransferase family. This sequence in the C-terminal section; belongs to the DAO family. The cofactor is FAD.

The protein resides in the cytoplasm. The enzyme catalyses 5-aminomethyl-2-thiouridine(34) in tRNA + S-adenosyl-L-methionine = 5-methylaminomethyl-2-thiouridine(34) in tRNA + S-adenosyl-L-homocysteine + H(+). In terms of biological role, catalyzes the last two steps in the biosynthesis of 5-methylaminomethyl-2-thiouridine (mnm(5)s(2)U) at the wobble position (U34) in tRNA. Catalyzes the FAD-dependent demodification of cmnm(5)s(2)U34 to nm(5)s(2)U34, followed by the transfer of a methyl group from S-adenosyl-L-methionine to nm(5)s(2)U34, to form mnm(5)s(2)U34. The sequence is that of tRNA 5-methylaminomethyl-2-thiouridine biosynthesis bifunctional protein MnmC from Burkholderia orbicola (strain MC0-3).